We begin with the raw amino-acid sequence, 744 residues long: C-type polyheme cytochrome OmcB (744 aa).

Positions 1 to 23 are cleaved as a signal peptide; that stretch reads MSRKVTKYSAVLAVSLFAAALAG. The N-palmitoyl cysteine moiety is linked to residue Cys-24. The S-diacylglycerol cysteine moiety is linked to residue Cys-24. Heme c is bound by residues Cys-48, Cys-51, His-52, Cys-81, Cys-84, His-85, Cys-107, Cys-110, His-111, Cys-141, Cys-144, His-145, Cys-185, Cys-188, His-189, Cys-225, Cys-228, His-229, Cys-303, Cys-306, His-307, Cys-382, Cys-385, His-386, Cys-430, Cys-433, His-434, Cys-480, Cys-483, His-484, Cys-555, Cys-558, His-559, Cys-587, Cys-590, and His-591.

Post-translationally, binds 12 heme c groups per subunit.

It localises to the cell outer membrane. Its function is as follows. Involved in anaerobic respiration with Fe(3+) as terminal electron acceptor. Acts as an electron-transport mediator in the dissimilatory reduction of Fe(3+). This Geobacter sulfurreducens (strain DL-1 / KN400) protein is C-type polyheme cytochrome OmcB (omcB).